Here is a 353-residue protein sequence, read N- to C-terminus: MFVDRLQLLNFRNYEELLIDFSPGKILIYGANGQGKTNLIEAIYYLVIGKSFRGKDNSLIRFGAESFQIGAKISKNGQKTTLGVEYSVKGKFFLKNGQKQKSFSSILGNLKGVLFTPDEPVIFFGFPANRRKALDLFLAQTSKTYLLNLIYYQKVLTNKNALLKQVWNVDNLIEAWNYKLAEFGAEIIKEREKCLKILNDIINELNAQLRFLPGKIEASYKTSGADDKEKIFELLKQKYTEEKDKKQALFGPHRDDLNFYVNGRDLKIFGSQGQKKGALLLFKLSQAVYMAKVSGEKPVVLLDDLYSEFDKEKREALEGFFLKYSDQVFITATEPIDLKNYHQVVFIENGKVS.

Residue 30–37 (GANGQGKT) coordinates ATP.

This sequence belongs to the RecF family.

The protein resides in the cytoplasm. In terms of biological role, the RecF protein is involved in DNA metabolism; it is required for DNA replication and normal SOS inducibility. RecF binds preferentially to single-stranded, linear DNA. It also seems to bind ATP. This chain is DNA replication and repair protein RecF, found in Carboxydothermus hydrogenoformans (strain ATCC BAA-161 / DSM 6008 / Z-2901).